Here is a 287-residue protein sequence, read N- to C-terminus: 4-hydroxybenzoate octaprenyltransferase (287 aa).

The next 9 helical transmembrane spans lie at 22–42 (IGTL…AQGF), 45–65 (LGVL…GCVI), 91–111 (TSTE…LLVL), 114–134 (NSLT…YPFM), 139–159 (QLPQ…AFAA), 161–181 (ANAL…WTIA), 212–232 (IIIA…GWLE), 236–256 (WIYF…QLQI), and 267–287 (AFLD…LGYL).

It belongs to the UbiA prenyltransferase family. Mg(2+) serves as cofactor.

Its subcellular location is the cell inner membrane. It catalyses the reaction all-trans-octaprenyl diphosphate + 4-hydroxybenzoate = 4-hydroxy-3-(all-trans-octaprenyl)benzoate + diphosphate. It participates in cofactor biosynthesis; ubiquinone biosynthesis. Functionally, catalyzes the prenylation of para-hydroxybenzoate (PHB) with an all-trans polyprenyl group. Mediates the second step in the final reaction sequence of ubiquinone-8 (UQ-8) biosynthesis, which is the condensation of the polyisoprenoid side chain with PHB, generating the first membrane-bound Q intermediate 3-octaprenyl-4-hydroxybenzoate. This Psychromonas ingrahamii (strain DSM 17664 / CCUG 51855 / 37) protein is 4-hydroxybenzoate octaprenyltransferase.